Consider the following 113-residue polypeptide: uncharacterized protein (113 aa).

The N-terminal stretch at 1–16 (MKCLVVLTALFGISTA) is a signal peptide. Over residues 81-101 (GGNGGNGGGGNGGNNGNGNGN) the composition is skewed to gly residues. Residues 81 to 103 (GGNGGNGGGGNGGNNGNGNGNNG) are disordered.

Nacreous layer of shell (at protein level).

It localises to the secreted. This is an uncharacterized protein from Margaritifera margaritifera (Freshwater pearl mussel).